Reading from the N-terminus, the 106-residue chain is MYAIVRSGGRQHKVAVGDIVEVDKISTGKVGDTVELSTLLVVDGDAVTSDPWVLAGIKVQAEIVDHHKGQKIDILRYKNKTGYRRRQGHRQQYTAIKVTEIPAAAK.

The protein belongs to the bacterial ribosomal protein bL21 family. Part of the 50S ribosomal subunit. Contacts protein L20.

Functionally, this protein binds to 23S rRNA in the presence of protein L20. The protein is Large ribosomal subunit protein bL21 of Streptomyces coelicolor (strain ATCC BAA-471 / A3(2) / M145).